The sequence spans 321 residues: Transaldolase (321 aa).

Lys-132 functions as the Schiff-base intermediate with substrate in the catalytic mechanism.

It belongs to the transaldolase family. Type 1 subfamily. Homodimer.

The protein localises to the cytoplasm. It catalyses the reaction D-sedoheptulose 7-phosphate + D-glyceraldehyde 3-phosphate = D-erythrose 4-phosphate + beta-D-fructose 6-phosphate. It participates in carbohydrate degradation; pentose phosphate pathway; D-glyceraldehyde 3-phosphate and beta-D-fructose 6-phosphate from D-ribose 5-phosphate and D-xylulose 5-phosphate (non-oxidative stage): step 2/3. Transaldolase is important for the balance of metabolites in the pentose-phosphate pathway. The polypeptide is Transaldolase (Agrobacterium fabrum (strain C58 / ATCC 33970) (Agrobacterium tumefaciens (strain C58))).